A 245-amino-acid chain; its full sequence is Probable phosphatase YcdX (245 aa).

9 residues coordinate Zn(2+): His7, His9, His15, His40, Glu73, His101, His131, Asp192, and His194.

The protein belongs to the PHP family. In terms of assembly, homotrimer. Zn(2+) is required as a cofactor.

The sequence is that of Probable phosphatase YcdX from Escherichia fergusonii (strain ATCC 35469 / DSM 13698 / CCUG 18766 / IAM 14443 / JCM 21226 / LMG 7866 / NBRC 102419 / NCTC 12128 / CDC 0568-73).